Reading from the N-terminus, the 123-residue chain is Small ribosomal subunit protein uS12 (123 aa).

Asp-89 is subject to 3-methylthioaspartic acid.

Belongs to the universal ribosomal protein uS12 family. Part of the 30S ribosomal subunit. Contacts proteins S8 and S17. May interact with IF1 in the 30S initiation complex.

Functionally, with S4 and S5 plays an important role in translational accuracy. In terms of biological role, interacts with and stabilizes bases of the 16S rRNA that are involved in tRNA selection in the A site and with the mRNA backbone. Located at the interface of the 30S and 50S subunits, it traverses the body of the 30S subunit contacting proteins on the other side and probably holding the rRNA structure together. The combined cluster of proteins S8, S12 and S17 appears to hold together the shoulder and platform of the 30S subunit. This is Small ribosomal subunit protein uS12 from Methylorubrum extorquens (strain PA1) (Methylobacterium extorquens).